We begin with the raw amino-acid sequence, 398 residues long: S-adenosylmethionine decarboxylase proenzyme (398 aa).

Catalysis depends on residues Glu-18 and Glu-21. Residue Ser-78 is the Schiff-base intermediate with substrate; via pyruvic acid of the active site. Ser-78 carries the pyruvic acid (Ser); by autocatalysis modification. Catalysis depends on Cys-92, which acts as the Proton donor; for catalytic activity. Residues Ser-243 and His-256 each act as proton acceptor; for processing activity in the active site.

It belongs to the eukaryotic AdoMetDC family. Requires pyruvate as cofactor. Post-translationally, is synthesized initially as an inactive proenzyme. Formation of the active enzyme involves a self-maturation process in which the active site pyruvoyl group is generated from an internal serine residue via an autocatalytic post-translational modification. Two non-identical subunits are generated from the proenzyme in this reaction, and the pyruvate is formed at the N-terminus of the alpha chain, which is derived from the carboxyl end of the proenzyme. The post-translation cleavage follows an unusual pathway, termed non-hydrolytic serinolysis, in which the side chain hydroxyl group of the serine supplies its oxygen atom to form the C-terminus of the beta chain, while the remainder of the serine residue undergoes an oxidative deamination to produce ammonia and the pyruvoyl group blocking the N-terminus of the alpha chain.

The enzyme catalyses S-adenosyl-L-methionine + H(+) = S-adenosyl 3-(methylsulfanyl)propylamine + CO2. The protein operates within amine and polyamine biosynthesis; S-adenosylmethioninamine biosynthesis; S-adenosylmethioninamine from S-adenosyl-L-methionine: step 1/1. The protein is S-adenosylmethionine decarboxylase proenzyme (SAMDC) of Oryza sativa subsp. indica (Rice).